Reading from the N-terminus, the 174-residue chain is Transgelin (174 aa).

One can recognise a Calponin-homology (CH) domain in the interval 3-109 (SQLEKEAREW…SIHSFSRYAA (107 aa)).

As to quaternary structure, binds to actin.

It localises to the cytoplasm. Functionally, has actin-binding and actin-bundling activity and is a component of the actin patch. Stabilizes actin filaments against disassembly. Cross-links F-actin and is required for the formation of the contractile F-actin ring. The polypeptide is Transgelin (stg1) (Schizosaccharomyces pombe (strain 972 / ATCC 24843) (Fission yeast)).